The chain runs to 512 residues: Histidine ammonia-lyase (512 aa).

Residues 143–145 (CSG) constitute a cross-link (5-imidazolinone (Cys-Gly)). Residue Ser-144 is modified to 2,3-didehydroalanine (Ser).

It belongs to the PAL/histidase family. Post-translationally, contains an active site 4-methylidene-imidazol-5-one (MIO), which is formed autocatalytically by cyclization and dehydration of residues Cys-Ser-Gly.

The protein resides in the cytoplasm. It catalyses the reaction L-histidine = trans-urocanate + NH4(+). The protein operates within amino-acid degradation; L-histidine degradation into L-glutamate; N-formimidoyl-L-glutamate from L-histidine: step 1/3. The chain is Histidine ammonia-lyase from Streptomyces coelicolor (strain ATCC BAA-471 / A3(2) / M145).